Reading from the N-terminus, the 714-residue chain is A-kinase anchor protein 5 (714 aa).

Disordered regions lie at residues 1–146 (METS…GYVR) and 243–333 (VLEN…VGHT). An essential to the intracellular anchoring function region spans residues 1 to 164 (METSVSEIQI…EIKAQIQPDE (164 aa)). 2 positions are modified to phosphoserine: Ser-4 and Ser-22. Residues 10 to 32 (IETKDEKRPEAASPQKERQERKT) show a composition bias toward basic and acidic residues. Cys-36 carries S-palmitoyl cysteine lipidation. The span at 37-50 (FKRRKKVNKKKAKA) shows a compositional bias: basic residues. Composition is skewed to basic and acidic residues over residues 54–63 (TAEETEKHAP) and 88–100 (KPSE…KPSE). The AKAP CaM-binding motif lies at 74–94 (AGAWASIKRLVTHRKPSESAE). Cys-123 carries the S-palmitoyl cysteine lipid modification. Residues 243–268 (VLENSAADSPQPVTSTAPLSPATTHQ) show a composition bias toward polar residues. Residues 285 to 301 (GKDDGRRKTAAEEKKSG) show a composition bias toward basic and acidic residues. One copy of the 1; approximate repeat lies at 305-312 (LGQAEEAS). The 28 X 8 AA repeats of V-G-Q-A-E-E-A-T stretch occupies residues 305–597 (LGQAEEASSV…PIVGQAEETV (293 aa)). Positions 310 to 323 (EASSVSQADKSVLS) are enriched in polar residues. The stretch at 322–329 (LSQAEEAT) is one 2; approximate repeat. One copy of the 3; approximate repeat lies at 330-337 (VGHTEEAT). One copy of the 4; approximate repeat lies at 350-357 (LSQAEEAT). A 5; approximate repeat occupies 358–365 (VAQAKETV). A 6; approximate repeat occupies 366–373 (LSQAEEVK). A 7; approximate repeat occupies 398–405 (VSQAEEAI). One copy of the 8; approximate repeat lies at 414–421 (MGQAEEAT). Repeat copies occupy residues 430–437 (VGQAEEAT), 438–445 (VGQAEEAT), 446–453 (VGQAEEAT), 454–461 (VGQAEEAT), and 462–469 (VGQAEEAT). Residues 470–477 (VGQAGEAT) form a 14; approximate repeat. A 15; approximate repeat occupies 486 to 493 (VGQAEEAI). 4 repeat units span residues 494–501 (VGQAEEAT), 502–509 (VGQAEEAT), 510–517 (VGQAEEAT), and 518–525 (VGQAEEAT). One copy of the 20; approximate repeat lies at 526-533 (VDQAEEAT). Residues 534–541 (VGQAEEAT) form repeat 21. A 22; approximate repeat occupies 542–549 (VGQAGEAA). A 23; approximate repeat occupies 550-557 (VGQAEEAI). The 24; approximate repeat unit spans residues 558-565 (VAQAEEAT). Copy 25 of the repeat occupies 566–573 (VGQAGEAT). One copy of the 26; approximate repeat lies at 574–581 (VGQAEKAT). A 27; approximate repeat occupies 582–589 (VGQAEEPI). The stretch at 590–597 (VGQAEETV) is one 28; approximate repeat. Residues 675-696 (YETLLIETASSLVKNAIELSVE) form an RII-beta subunit binding domain region. Residues 697–714 (QLVNEMVSEDNQINTLFQ) form a tethers NFATC2 to CRAC channels region.

As to quaternary structure, binding protein for dimer of the RII-beta regulatory subunit of cAMP-dependent protein kinase (PKA) and also for the protein kinase C (PKC) and the phosphatase calcineurin (PP2B). Each enzyme is inhibited when bound to the anchoring protein. Also binds the beta2-adrenergic receptor. Part of a complex containing AKAP5, ADCY5, ADCY6 and PDE4C. Interacts with ADCY8, and enhances its phosphorylation at lipid rafts. Interacts with ORAI1 (isoform alpha) (via N-terminus) upon store depletion and in response to LTC4. Does not interact with ORAI2 and ORAI3 paralogs. Interacts (via leucine zipper domain) with NFATC2/NFAT1. Interacts with calmodulin; the interaction is calcium-independent. Interacts with KCNQ2; the interaction may help KCNQ2 channel complex to retain calcium-bound calmodulin. Interacts with KCNK2; the channel is recruited to postsynaptic microdomains by AKAP5 where it can integrate neurotransmitter receptor signals. Part of a complex composed of AKAP5 and ADRB2. Palmitoylated. Palmitoylation at Cys-36 and Cys-123 plays a key role in the targeting of AKAP5 to lipid rafts. Palmitoylation by ZDHHC2 is required for AKAP5 function in LTP-stimulated recycling endosome exocytosis.

The protein localises to the postsynaptic recycling endosome membrane. The protein resides in the cell projection. It localises to the dendrite. Its subcellular location is the postsynaptic cell membrane. In terms of biological role, multivalent scaffold protein that anchors the cAMP-dependent protein kinase/PKA to cytoskeletal and/or organelle-associated proteins, targeting the signal carried by cAMP to specific intracellular effectors. Association with the beta2-adrenergic receptor (beta2-AR) not only regulates beta2-AR signaling pathway, but also the activation by PKA by switching off the beta2-AR signaling cascade. Plays a role in long term synaptic potentiation by regulating protein trafficking from the dendritic recycling endosomes to the plasma membrane and controlling both structural and functional plasticity at excitatory synapses. In hippocampal pyramidal neurons, recruits KCNK2/TREK-1 channel at postsynaptic dense bodies microdomains and converts it to a leak channel no longer sensitive to stimulation by arachidonic acid, acidic pH or mechanical stress, nor inhibited by Gq-coupled receptors but still under the negative control of Gs-coupled receptors. Associates with ORAI1 pore-forming subunit of CRAC channels in Ca(2+) signaling microdomains where it recruits NFATC2/NFAT1 and couples store-operated Ca(2+) influx to calmodulin and calcineurin signaling and activation of NFAT-dependent transcriptional responses. In Rattus norvegicus (Rat), this protein is A-kinase anchor protein 5 (Akap5).